A 384-amino-acid chain; its full sequence is N-acetylneuraminate epimerase (384 aa).

The signal sequence occupies residues 1–24; sequence MMKTKYLLLPLLASSSLLSHMAFA. 7 Kelch repeats span residues 46 to 90, 92 to 145, 147 to 184, 185 to 230, 233 to 281, 303 to 352, and 354 to 383; these read KVYV…TVVG, NIFV…YSPD, KQVLFFGGYSKPLFDKYLADITRTDKKAQPEQWQKIVD, DYMG…VIDG, ITLI…IAGA, AQFE…SVKG, and VLMVGGERADRTASTKVYLVGLNNNQIDIV. Glu-239 functions as the Proton acceptor in the catalytic mechanism.

It belongs to the NanM family. As to quaternary structure, homodimer.

Its subcellular location is the periplasm. It catalyses the reaction N-acetyl-alpha-neuraminate = N-acetyl-beta-neuraminate. Converts alpha-N-acetylneuranimic acid (Neu5Ac) to the beta-anomer, accelerating the equilibrium between the alpha- and beta-anomers. Probably facilitates sialidase-negative bacteria to compete successfully for limited amounts of extracellular Neu5Ac, which is likely taken up in the beta-anomer. In addition, the rapid removal of sialic acid from solution might be advantageous to the bacterium to damp down host responses. This Vibrio vulnificus (strain YJ016) protein is N-acetylneuraminate epimerase.